Consider the following 476-residue polypeptide: Bifunctional protein HldE (476 aa).

The ribokinase stretch occupies residues 1 to 319 (MKVSLPAFEK…EALALHHGES (319 aa)). 195–198 (NMSE) is an ATP binding site. Asp-264 is a catalytic residue. The interval 345–476 (MTNGCFDILH…AIIQNIMANQ (132 aa)) is cytidylyltransferase.

It in the N-terminal section; belongs to the carbohydrate kinase PfkB family. This sequence in the C-terminal section; belongs to the cytidylyltransferase family. In terms of assembly, homodimer.

The catalysed reaction is D-glycero-beta-D-manno-heptose 7-phosphate + ATP = D-glycero-beta-D-manno-heptose 1,7-bisphosphate + ADP + H(+). The enzyme catalyses D-glycero-beta-D-manno-heptose 1-phosphate + ATP + H(+) = ADP-D-glycero-beta-D-manno-heptose + diphosphate. The protein operates within nucleotide-sugar biosynthesis; ADP-L-glycero-beta-D-manno-heptose biosynthesis; ADP-L-glycero-beta-D-manno-heptose from D-glycero-beta-D-manno-heptose 7-phosphate: step 1/4. It functions in the pathway nucleotide-sugar biosynthesis; ADP-L-glycero-beta-D-manno-heptose biosynthesis; ADP-L-glycero-beta-D-manno-heptose from D-glycero-beta-D-manno-heptose 7-phosphate: step 3/4. In terms of biological role, catalyzes the phosphorylation of D-glycero-D-manno-heptose 7-phosphate at the C-1 position to selectively form D-glycero-beta-D-manno-heptose-1,7-bisphosphate. Its function is as follows. Catalyzes the ADP transfer from ATP to D-glycero-beta-D-manno-heptose 1-phosphate, yielding ADP-D-glycero-beta-D-manno-heptose. The polypeptide is Bifunctional protein HldE (Shewanella sp. (strain W3-18-1)).